We begin with the raw amino-acid sequence, 274 residues long: Undecaprenyl-diphosphatase (274 aa).

A run of 6 helical transmembrane segments spans residues 44-64, 85-105, 109-129, 185-205, 215-235, and 250-270; these read AKVF…LVYW, LNVL…GKAI, LFTP…ILWA, ATDY…VYSL, ADIP…WLCV, and FAWY…SGLV.

The protein belongs to the UppP family.

It is found in the cell inner membrane. The catalysed reaction is di-trans,octa-cis-undecaprenyl diphosphate + H2O = di-trans,octa-cis-undecaprenyl phosphate + phosphate + H(+). Functionally, catalyzes the dephosphorylation of undecaprenyl diphosphate (UPP). Confers resistance to bacitracin. The protein is Undecaprenyl-diphosphatase of Acidovorax ebreus (strain TPSY) (Diaphorobacter sp. (strain TPSY)).